The chain runs to 3103 residues: MASALLCFLAAILPGMIAAQNTWVLGTSDVRTVEPVNPVGGGVSLGGIDIDSTENRIIVQNTGIAVPFGREKAIDPNSELVINVQAGDSCSIKVLPRQSDPLSQIPGRLVPPSFPCDFSPGEVKYVHFGSRKPQTDKVKLQLRYDTATDVYIIPFTIDVRVESKQLEIVTRNVPLVVQDLMGTSDALDADKLEFEFDSNTEVCKVTVLSSTSGLPRYGEVMNHDEQGQMIDCNDFLELGIQYRHTAATSSPREDYIPLVVELQNQQGQVIKQEYFQSMVRIIDGDDNTPPSLVLSSDMMMEVDQFVMTAITPSILAAEDVETPADMLIFNITSQTLGPDDGMIVSTDDRNQPITSFTQKDLRDLKIAYKPPPRDTDVQTIYQIELEIVDSELATSETHSLLIVVKPKNTLAPVVTTNTGLVLFEGQSRPLLGGQNLGISDEDNLQDVIIAPINGSRYGELRIGNQRIKQFTIADLIEGAVTYHHYGTDTYSDNIIFRMTDGQHEVEFLFPITIAPIDDEAPIVDVNTGVTVNENEVVAITNFVLSATDIDSDDSEIRFVLEQPLSDMGNLFLRQVNIPEDPQNWISQDNFYEREVTEFTLEDIQNGHLFYQHGGSHNADPVFDRILFRVVDSADPQPNESPVQELLVKVMPQDLQPPEMFGGTTLQLSVDEFQITPILKKNLRFTDMDSNDRELKYTIVSPLTDSDSNNNLPVGDIVLTDEPNTPINMFTQAQINHMKVSYKPPSTELGIAPRAITFQFVVQDTQGNMGSPHNFIILLRPVDNQPPTITNTGVQVFERGTVIIDQTMLDATDPDTDRNSIRVVLVQPPVFGTMNLNDIALEKGDEFTLGDIENSRVKYVSGDAEEQSDEIHLEITDGVHVVPIVIHINVAPIDDEAPTLDLPPGTIGSFLEVQENSFSLITSNILSASDPDTEDLLLTFIVDRQPNEGRIESNGVVADVFTQQDIVNGLVRYVHTGGEIGPSKRDDSFNLTLSDMSPDWILGGNEITQVEVYVTVLPVDNLAPNVTMGVQFYVDEAGKGNINMTHLQAPDVDTEDDDILCTIVVAPSVGYLENISPAPGSEKSRGGMPISAFSIKDLRLNHINYVQSIHQGMEPEEDQFTFRCTDGVNESPNFLFPINIIPVNDEEPQVYAREIIVDEGGQRIIDEPLLRAEDGDVPADELHFFIVTPPQHGTITYTRLEGDIPILNFTMDQIANGNDIKYIHDDSETTEDSFTVLLTDGKYEITKEITITILEVDDETPRLTINDGIDIEIGESRIISNRILKATDLDSADSNLTYTVRYAPEKGLLQRLSKFDGSVVENITLGMNFTQWEVDNQRIRYVHTDGDGGRDLIKFDITDGTNPLIDRYFYVTVDHIDNVHPSIINAGVTMQEGSRVTLTTSIISTSDLNSPDEDLLFTITTAPTKGHLESTDNPGMPINSFTQLDLAGSKIYYVHTADDEVKMDSFQFQVTDGFNTVVRTFRISFTDVDNKEPVVRYDTIRLQEGDNKLITPFELGIDDRDTPANELRFTITQLPIHGNILRNNTALVTEFTMHDINENLISYQHDGSEQTADSFSFIVTDGTHNEFYVLPDITTLTRQPQQVPIEIVPVDNGAPQIVVNRGAPTLDLLGTGELGFMITNKYLMSEDRDSVDNSLLYVITTQPQHGYIMNIALGNISITNFTQSDVNNMYIQYIVYPNVDATSDTFFVEVRDAGGNTLPNQPFRLNWSWISLEKEYYEVNETERYLNIKLVRRGYLGETSFVGIQTADGTAIADEDFRGKSARQVQFNPGQTEGFWRVRILNDRLYEQAEVFEIILHDPVMGALEYPDRAVVTIFDAEDESGVFIDLPDNYVIEEDIGEFLVPIRRTGDLSQELMASCSTMPGSATGSDPSPVLSFSDYISRMEEDPDNMVAFDKGEDLAYCRILIIDDSLYEEDETFQVKLSNPMGGRIGNPSAINVIIAGDTDDVPSFYFGEPEYKVDENAPFVEVTVFRTGTDVSKMASVTVRSRASNPVSAVAGEDYAGISRNLDFAPGVNQQTVKVYIIDDRGQPRLEGPETFELVLNMPMNGVLGAPSKTVITINDTISDLPKVEFRHPTYEVNENDIRITAEVVRSGDLSIESSVRCYTRQGSAQVMMDYDERPNTEASIITFLPGERSKTCTVLLMDDNVFEPDEAFRLVLGSPRTASGVPAVVGEQNVTVVTVHDVGDAPIIKFPETKFSIDEPTDLDSVVTVSIPVIRMGDNTQTSIVRVFTKDGSARSGIDYNPLSQVLEFGFNVTERVVEIEILPDEDRNEMREAFTLHITNDQMMIADVQMNHAIIYIEQEGQASGVTFPSQPVVVSLLDYDDIPNARTNPPRGYPLICVSPCNPKYPDFATTGPICDSEGLNDTVTQFRWMVSAPTSESGVTSPLRQTDSDTFFSSTKSITLDSVYFGPGSRVQCVARAVGSEGDAGREHPSNSIVISTTDGMCMPRVANAIGAEPFTARMRYTGPADPDYPNKVRLTVTMPHVDGMLPVISTRQLSNFELALSKDGYRVGTHRCSNLLDYNEIPTDFGFITEETKNPNVVGDTYAYQYSPELRGEETLRFYRNLNLEACLWEFNAYYDMSELLDECGGLVGTDGQVLDLVQSYVSMRIPLFVSFVFHSPVATGGWKHFDQQSTLQLTFVYDTSILWQNGIGSQVTTGTQSLQGNLYPTSMRIDEDGRLVVNFRTEALFNGLFVQSHQSTDVVSTVNSIDHPGITYSLSLLRTEPTYAQPEQLWQFVSDLSVSDYSGTYTIQLVPCTTLPNTVYSQPPVCNPEDIITFELPIRFQQVSDPVPEEYSLNTEFVLVGKESIYLSDGSMGFGEGSDVAYNPGDTIFGRIHVDPVQNLGAGFNLDIQKVFLCTGRDGYIPKYNPAANEYGCVADTPNLLYAFKILDRGAPDTIVREFNGLPFNATLAIDNAADLELVQQPGADGFRLASDALFEVDYGRTWYLHSIYSMRSSESSGIGKRETEHHAISSRQRRQANSEALVDPAQGQGTNMKRVALQGPQDVDNNLGGTYELAPKGTNVVMIAVVIGVILIILLVALVIGVVVRRRQAKQQPVVVVNGSAKVVSNVHFDDNTEV.

An N-terminal signal peptide occupies residues 1-19 (MASALLCFLAAILPGMIAA). At 20 to 3047 (QNTWVLGTSD…TYELAPKGTN (3028 aa)) the chain is on the extracellular side. CSPG repeat units lie at residues 289–388 (PPSL…LEIV), 411–499 (APVV…FRMT), 520–630 (APIV…FRVV), 656–762 (PPEM…FVVQ), 784–875 (QPPT…LEIT), 901–993 (LPPG…LTLS), 1022–1124 (APNV…FRCT), 1145–1238 (EEPQ…VLLT), 1259–1357 (TPRL…FDIT), 1378–1470 (VHPS…FQVT), 1490–1579 (KEPV…FIVT), and 1613–1710 (APQI…VEVR). 2 N-linked (GlcNAc...) asparagine glycosylation sites follow: asparagine 330 and asparagine 453. Asparagine 989, asparagine 1024, asparagine 1042, asparagine 1207, asparagine 1294, asparagine 1321, and asparagine 1327 each carry an N-linked (GlcNAc...) asparagine glycan. 5 N-linked (GlcNAc...) asparagine glycosylation sites follow: asparagine 1542, asparagine 1674, asparagine 1679, asparagine 1725, and asparagine 1739. Calx-beta domains follow at residues 1717–1816 (LPNQ…IILH), 1829–1942 (AVVT…VKLS), 1956–2062 (NVII…LVLN), and 2077–2179 (ITIN…LVLG). 5 N-linked (GlcNAc...) asparagine glycosylation sites follow: asparagine 2080, asparagine 2195, asparagine 2274, asparagine 2385, and asparagine 2932. In terms of domain architecture, Calx-beta 5 spans 2197–2302 (TVVTVHDVGD…MREAFTLHIT (106 aa)). Residues 2983–3013 (SSGIGKRETEHHAISSRQRRQANSEALVDPA) are disordered. Residues 3048–3068 (VVMIAVVIGVILIILLVALVI) form a helical membrane-spanning segment. Residues 3069-3103 (GVVVRRRQAKQQPVVVVNGSAKVVSNVHFDDNTEV) lie on the Cytoplasmic side of the membrane.

The protein belongs to the FRAS1 family. Component of extracellular matrix fibers that interact with PMC filopodia during gastrulation (at protein level).

It localises to the cell membrane. Extracellular matrix protein that may serve as substrate for the migratory primary mesenchyme cells (PMCs), the interaction possibly providing guidance information to migrating PMCs. This chain is Extracellular matrix protein 3 (ECM3), found in Lytechinus variegatus (Green sea urchin).